Reading from the N-terminus, the 684-residue chain is Protein real-time (684 aa).

One can recognise a PRELI/MSF1 domain in the interval 2–178 (VQKYESPVRI…FVNELKQEGI (177 aa)). The CRAL-TRIO domain occupies 297-474 (TPAVVEKYFP…FLGGSCNVID (178 aa)). The region spanning 537–684 (HHGLYKAVDL…GFSSNSLQSR (148 aa)) is the GOLD domain.

It localises to the mitochondrion. In Anopheles gambiae (African malaria mosquito), this protein is Protein real-time.